A 544-amino-acid polypeptide reads, in one-letter code: Chaperonin GroEL (544 aa).

Residues 30–33 (TLGP), lysine 51, 87–91 (DGTTT), glycine 415, and aspartate 495 contribute to the ATP site.

Belongs to the chaperonin (HSP60) family. As to quaternary structure, forms a cylinder of 14 subunits composed of two heptameric rings stacked back-to-back. Interacts with the co-chaperonin GroES.

The protein resides in the cell outer membrane. The enzyme catalyses ATP + H2O + a folded polypeptide = ADP + phosphate + an unfolded polypeptide.. Together with its co-chaperonin GroES, plays an essential role in assisting protein folding. The GroEL-GroES system forms a nano-cage that allows encapsulation of the non-native substrate proteins and provides a physical environment optimized to promote and accelerate protein folding. The polypeptide is Chaperonin GroEL (Neisseria gonorrhoeae).